Consider the following 96-residue polypeptide: Evasin P1100 (96 aa).

A signal peptide spans 1–28 (MAFNVITFLQFSVFVVILFNINLHSASA). 3 disulfides stabilise this stretch: C48–C67, C52–C69, and C63–C80. The N-linked (GlcNAc...) asparagine glycan is linked to N51. N74 is a glycosylation site (N-linked (GlcNAc...) asparagine).

It localises to the secreted. Salivary chemokine-binding protein which binds to host chemokines CXCL1, CXCL2, CXCL3, CXCL5, CXCL6, CXCL10, CXCL11 and CXCL13. This chain is Evasin P1100, found in Ixodes ricinus (Common tick).